The primary structure comprises 594 residues: A-type ATP synthase subunit A (594 aa).

236 to 243 (GPFGSGKT) lines the ATP pocket.

It belongs to the ATPase alpha/beta chains family. Has multiple subunits with at least A(3), B(3), C, D, E, F, H, I and proteolipid K(x).

The protein localises to the cell membrane. The catalysed reaction is ATP + H2O + 4 H(+)(in) = ADP + phosphate + 5 H(+)(out). Component of the A-type ATP synthase that produces ATP from ADP in the presence of a proton gradient across the membrane. The A chain is the catalytic subunit. This Pyrobaculum neutrophilum (strain DSM 2338 / JCM 9278 / NBRC 100436 / V24Sta) (Thermoproteus neutrophilus) protein is A-type ATP synthase subunit A.